The sequence spans 332 residues: Anthranilate phosphoribosyltransferase (332 aa).

5-phospho-alpha-D-ribose 1-diphosphate is bound by residues Gly78, 81 to 82 (GD), Ser86, 88 to 91 (NIST), 106 to 114 (KHGNKSITS), and Ser118. Gly78 provides a ligand contact to anthranilate. Ser90 is a binding site for Mg(2+). Asn109 is a binding site for anthranilate. Arg163 provides a ligand contact to anthranilate. Mg(2+)-binding residues include Asp222 and Glu223.

It belongs to the anthranilate phosphoribosyltransferase family. Homodimer. The cofactor is Mg(2+).

The enzyme catalyses N-(5-phospho-beta-D-ribosyl)anthranilate + diphosphate = 5-phospho-alpha-D-ribose 1-diphosphate + anthranilate. It participates in amino-acid biosynthesis; L-tryptophan biosynthesis; L-tryptophan from chorismate: step 2/5. In terms of biological role, catalyzes the transfer of the phosphoribosyl group of 5-phosphorylribose-1-pyrophosphate (PRPP) to anthranilate to yield N-(5'-phosphoribosyl)-anthranilate (PRA). This Staphylococcus aureus (strain Mu3 / ATCC 700698) protein is Anthranilate phosphoribosyltransferase.